A 111-amino-acid chain; its full sequence is Rubredoxin (111 aa).

A Rubredoxin-like domain is found at 11–62 (LDRFECRSCGYVYEPEKGDNKHDIAPETPFAELPINWRCPVCTAKKAAFTNI). Residues cysteine 16, cysteine 19, cysteine 49, and cysteine 52 each coordinate Fe cation.

Belongs to the rubredoxin family. Fe(3+) serves as cofactor.

In terms of biological role, rubredoxin is a small nonheme, iron protein lacking acid-labile sulfide. Its single Fe, chelated to 4 Cys, functions as an electron acceptor and may also stabilize the conformation of the molecule. Could be involved in hydrogenase-linked redox processes. The protein is Rubredoxin (rub) of Nostoc sp. (strain PCC 7120 / SAG 25.82 / UTEX 2576).